The chain runs to 122 residues: Large ribosomal subunit protein uL14 (122 aa).

Belongs to the universal ribosomal protein uL14 family. Part of the 50S ribosomal subunit. Forms a cluster with proteins L3 and L19. In the 70S ribosome, L14 and L19 interact and together make contacts with the 16S rRNA in bridges B5 and B8.

In terms of biological role, binds to 23S rRNA. Forms part of two intersubunit bridges in the 70S ribosome. The protein is Large ribosomal subunit protein uL14 of Burkholderia lata (strain ATCC 17760 / DSM 23089 / LMG 22485 / NCIMB 9086 / R18194 / 383).